Here is a 234-residue protein sequence, read N- to C-terminus: Mitochondrial assembly of ribosomal large subunit protein 1 (234 aa).

Residues 63–88 are disordered; that stretch reads SEPGLEERAEGTVNEGRPESDAADHT.

This sequence belongs to the Iojap/RsfS family. As to quaternary structure, associates with the mitochondrial ribosome large subunit (39S) via interaction with MRPL12 and/or MRPL14. The interaction generates steric hindrance that is expected to prevent premature association of the 28S and 39S ribosomal subunits. Interacts with intermediates of the mitochondrial ribosome large subunit (mt-LSU) (recruits the mitochondrial ribosome and complex I assembly factor AltMIEF1 and NDUFAB1); regulates mitochondrial ribosomes assembly. Interacts with MRPL12 and MRPL14.

It localises to the mitochondrion matrix. Functionally, required for normal mitochondrial ribosome function and mitochondrial translation. May play a role in ribosome biogenesis by preventing premature association of the 28S and 39S ribosomal subunits. Interacts with mitochondrial ribosomal protein uL14m (MRPL14), probably blocking formation of intersubunit bridge B8, preventing association of the 28S and 39S ribosomal subunits. Addition to isolated mitochondrial ribosomal subunits partially inhibits translation, probably by interfering with the association of the 28S and 39S ribosomal subunits and the formation of functional ribosomes. May also participate in the assembly and/or regulation of the stability of the large subunit of the mitochondrial ribosome. May function as a ribosomal silencing factor. This chain is Mitochondrial assembly of ribosomal large subunit protein 1 (MALSU1), found in Homo sapiens (Human).